A 368-amino-acid chain; its full sequence is 3-isopropylmalate dehydrogenase (368 aa).

79 to 91 (GPEWGTSSTVRPE) contacts NAD(+). The substrate site is built by R98, R108, R137, and D226. Mg(2+) is bound by residues D226, D251, and D255. 291–303 (GSAPDISGKGIVN) contacts NAD(+).

The protein belongs to the isocitrate and isopropylmalate dehydrogenases family. In terms of assembly, homodimer. Mg(2+) is required as a cofactor. Mn(2+) serves as cofactor.

It is found in the cytoplasm. The catalysed reaction is (2R,3S)-3-isopropylmalate + NAD(+) = 4-methyl-2-oxopentanoate + CO2 + NADH. The protein operates within amino-acid biosynthesis; L-leucine biosynthesis; L-leucine from 3-methyl-2-oxobutanoate: step 3/4. In terms of biological role, catalyzes the oxidation of 3-carboxy-2-hydroxy-4-methylpentanoate (3-isopropylmalate) to 3-carboxy-4-methyl-2-oxopentanoate. The product decarboxylates to 4-methyl-2 oxopentanoate. The sequence is that of 3-isopropylmalate dehydrogenase (LEU1) from Sordaria macrospora.